A 435-amino-acid chain; its full sequence is Serine--tRNA ligase (435 aa).

The disordered stretch occupies residues Q41 to A70. Positions A49–I58 are enriched in polar residues. T242–E244 contacts L-serine. R273 to E275 serves as a coordination point for ATP. E296 is a binding site for L-serine. E360 to S363 serves as a coordination point for ATP. S396 provides a ligand contact to L-serine.

Belongs to the class-II aminoacyl-tRNA synthetase family. Type-1 seryl-tRNA synthetase subfamily. Homodimer. The tRNA molecule binds across the dimer.

It localises to the cytoplasm. The enzyme catalyses tRNA(Ser) + L-serine + ATP = L-seryl-tRNA(Ser) + AMP + diphosphate + H(+). It carries out the reaction tRNA(Sec) + L-serine + ATP = L-seryl-tRNA(Sec) + AMP + diphosphate + H(+). It functions in the pathway aminoacyl-tRNA biosynthesis; selenocysteinyl-tRNA(Sec) biosynthesis; L-seryl-tRNA(Sec) from L-serine and tRNA(Sec): step 1/1. Functionally, catalyzes the attachment of serine to tRNA(Ser). Is also able to aminoacylate tRNA(Sec) with serine, to form the misacylated tRNA L-seryl-tRNA(Sec), which will be further converted into selenocysteinyl-tRNA(Sec). The protein is Serine--tRNA ligase of Aliivibrio fischeri (strain ATCC 700601 / ES114) (Vibrio fischeri).